Here is a 102-residue protein sequence, read N- to C-terminus: Small ribosomal subunit protein uS10 (102 aa).

The protein belongs to the universal ribosomal protein uS10 family. Part of the 30S ribosomal subunit.

Involved in the binding of tRNA to the ribosomes. This chain is Small ribosomal subunit protein uS10, found in Rhizobium etli (strain CIAT 652).